Here is a 394-residue protein sequence, read N- to C-terminus: Elongation factor Tu (394 aa).

The tr-type G domain maps to 10-204 (KPHINIGTIG…AVDDNIPTPE (195 aa)). A G1 region spans residues 19–26 (GHVDHGKT). Position 19-26 (19-26 (GHVDHGKT)) interacts with GTP. Residue threonine 26 coordinates Mg(2+). Residues 60–64 (GITIN) form a G2 region. Residues 81–84 (DCPG) form a G3 region. GTP is bound by residues 81-85 (DCPGH) and 136-139 (NKID). The interval 136–139 (NKID) is G4. A G5 region spans residues 174-176 (SAL).

This sequence belongs to the TRAFAC class translation factor GTPase superfamily. Classic translation factor GTPase family. EF-Tu/EF-1A subfamily. Monomer.

Its subcellular location is the cytoplasm. It carries out the reaction GTP + H2O = GDP + phosphate + H(+). GTP hydrolase that promotes the GTP-dependent binding of aminoacyl-tRNA to the A-site of ribosomes during protein biosynthesis. This Chlamydia caviae (strain ATCC VR-813 / DSM 19441 / 03DC25 / GPIC) (Chlamydophila caviae) protein is Elongation factor Tu.